Consider the following 274-residue polypeptide: Kit ligand (274 aa).

The first 25 residues, 1-25, serve as a signal peptide directing secretion; it reads MKKTQTWIVTCIYLQLLLFNPLVKT. At 26 to 215 the chain is on the extracellular side; it reads KGLCRNRVTD…TNPIEDSSIQ (190 aa). Intrachain disulfides connect Cys29-Cys114 and Cys68-Cys164. N-linked (GlcNAc...) asparagine glycosylation is found at Asn90, Asn97, Asn145, and Asn196. A helical membrane pass occupies residues 216 to 238; it reads WAVMALPACFSLVIGFAFGAFYW. Over 239–274 the chain is Cytoplasmic; it reads KKKQPNLTRTVENIQINEEDNEISMLQEKEREFQEV.

The protein belongs to the SCF family. Homodimer, non-covalently linked. A soluble form is produced by proteolytic processing of isoform 1 in the extracellular domain.

The protein localises to the cell membrane. The protein resides in the secreted. Its subcellular location is the cytoplasm. It localises to the cytoskeleton. It is found in the cell projection. The protein localises to the lamellipodium. The protein resides in the filopodium. Its function is as follows. Stimulates the proliferation of mast cells. Able to augment the proliferation of both myeloid and lymphoid hematopoietic progenitors in bone marrow culture. Also mediates cell-cell adhesion. Acts synergistically with other cytokines, probably interleukins. In Felis catus (Cat), this protein is Kit ligand (KITLG).